Reading from the N-terminus, the 86-residue chain is Large ribosomal subunit protein bL31B (86 aa).

Belongs to the bacterial ribosomal protein bL31 family. Type B subfamily. In terms of assembly, part of the 50S ribosomal subunit.

The chain is Large ribosomal subunit protein bL31B from Erwinia tasmaniensis (strain DSM 17950 / CFBP 7177 / CIP 109463 / NCPPB 4357 / Et1/99).